Consider the following 441-residue polypeptide: ATP-dependent protease ATPase subunit HslU (441 aa).

ATP-binding positions include isoleucine 18, 60-65, aspartate 254, glutamate 319, and arginine 391; that span reads GVGKTE.

It belongs to the ClpX chaperone family. HslU subfamily. In terms of assembly, a double ring-shaped homohexamer of HslV is capped on each side by a ring-shaped HslU homohexamer. The assembly of the HslU/HslV complex is dependent on binding of ATP.

The protein localises to the cytoplasm. In terms of biological role, ATPase subunit of a proteasome-like degradation complex; this subunit has chaperone activity. The binding of ATP and its subsequent hydrolysis by HslU are essential for unfolding of protein substrates subsequently hydrolyzed by HslV. HslU recognizes the N-terminal part of its protein substrates and unfolds these before they are guided to HslV for hydrolysis. The chain is ATP-dependent protease ATPase subunit HslU from Shewanella frigidimarina (strain NCIMB 400).